A 256-amino-acid chain; its full sequence is Fumarate reductase iron-sulfur subunit (256 aa).

The 2Fe-2S ferredoxin-type domain maps to 7–97; that stretch reads MNVEVLRYNP…HMRIEPLANF (91 aa). Tyr14 provides a ligand contact to a menaquinone. [2Fe-2S] cluster is bound by residues Cys58, Cys63, Cys66, and Cys78. Residues 151-180 enclose the 4Fe-4S ferredoxin-type domain; that stretch reads LEKYRQFSMCINCGLCYAACPQFGLNPEFL. [4Fe-4S] cluster contacts are provided by Cys160, Cys163, and Cys166. Positions 170, 216, and 222 each coordinate [3Fe-4S] cluster. Position 226 (Cys226) interacts with [4Fe-4S] cluster. 237–240 is a binding site for a menaquinone; sequence NQGK.

This sequence belongs to the succinate dehydrogenase/fumarate reductase iron-sulfur protein family. In terms of assembly, fumarate dehydrogenase forms part of an enzyme complex containing four subunits: a flavoprotein, an iron-sulfur, and two hydrophobic anchor proteins. [2Fe-2S] cluster serves as cofactor. It depends on [3Fe-4S] cluster as a cofactor. Requires [4Fe-4S] cluster as cofactor.

The protein localises to the cell inner membrane. The enzyme catalyses a quinone + succinate = fumarate + a quinol. The catalysed reaction is a menaquinone + succinate = a menaquinol + fumarate. This chain is Fumarate reductase iron-sulfur subunit (frdB), found in Haemophilus influenzae (strain ATCC 51907 / DSM 11121 / KW20 / Rd).